Consider the following 447-residue polypeptide: Tubulin beta-1 chain (447 aa).

GTP is bound by residues Q11, E69, S138, G142, T143, G144, N204, and N226. Residue E69 participates in Mg(2+) binding.

The protein belongs to the tubulin family. As to quaternary structure, dimer of alpha and beta chains. A typical microtubule is a hollow water-filled tube with an outer diameter of 25 nm and an inner diameter of 15 nM. Alpha-beta heterodimers associate head-to-tail to form protofilaments running lengthwise along the microtubule wall with the beta-tubulin subunit facing the microtubule plus end conferring a structural polarity. Microtubules usually have 13 protofilaments but different protofilament numbers can be found in some organisms and specialized cells. Mg(2+) serves as cofactor.

It is found in the cytoplasm. Its subcellular location is the cytoskeleton. Functionally, tubulin is the major constituent of microtubules, a cylinder consisting of laterally associated linear protofilaments composed of alpha- and beta-tubulin heterodimers. Microtubules grow by the addition of GTP-tubulin dimers to the microtubule end, where a stabilizing cap forms. Below the cap, tubulin dimers are in GDP-bound state, owing to GTPase activity of alpha-tubulin. The sequence is that of Tubulin beta-1 chain (benA) from Emericella nidulans (strain FGSC A4 / ATCC 38163 / CBS 112.46 / NRRL 194 / M139) (Aspergillus nidulans).